The following is a 621-amino-acid chain: DnaJ homolog subfamily C member 2 (621 aa).

Met1 carries the post-translational modification N-acetylmethionine. 4 positions are modified to phosphoserine: Ser47, Ser49, Ser60, and Ser63. The 74-residue stretch at 88–161 (DHYAVLGLGH…VKRRAFNSVD (74 aa)) folds into the J domain. A ZRF1-UBD region spans residues 160 to 250 (VDPTFDNSVP…RDERRWIEKQ (91 aa)). Ser183 is modified (phosphoserine). Disordered regions lie at residues 294–315 (EKKA…QRQA) and 427–453 (EEAE…GSKN). SANT domains follow at residues 449 to 511 (NGSK…KLDP) and 549 to 604 (TDFT…EMVK).

In terms of assembly, component of ribosome-associated complex (RAC), a heterodimer composed of Hsp70/DnaK-type chaperone HSPA14 and Hsp40/DnaJ-type chaperone DNAJC2. Interacts (via ZRF1-UBD region) with ID1. Post-translationally, phosphorylated in M (mitotic) phase.

It is found in the nucleus. It localises to the cytoplasm. The protein localises to the cytosol. Functionally, acts both as a chaperone in the cytosol and as a chromatin regulator in the nucleus. When cytosolic, acts as a molecular chaperone: component of the ribosome-associated complex (RAC), a complex involved in folding or maintaining nascent polypeptides in a folding-competent state. In the RAC complex, stimulates the ATPase activity of the ribosome-associated pool of Hsp70-type chaperones HSPA14 that bind to the nascent polypeptide chain. When nuclear, mediates the switching from polycomb-repressed genes to an active state: specifically recruited at histone H2A ubiquitinated at 'Lys-119' (H2AK119ub), and promotes the displacement of the polycomb PRC1 complex from chromatin, thereby facilitating transcription activation. The sequence is that of DnaJ homolog subfamily C member 2 (DNAJC2) from Macaca fascicularis (Crab-eating macaque).